The primary structure comprises 111 residues: Cryptic phage CTXphi transcriptional repressor RstR (111 aa).

The 55-residue stretch at 6–60 folds into the HTH cro/C1-type domain; it reads IRDLRVERDLNQEEVANGIGVGKNTYLAYEKGTQSPKLETVEKLAKFYGVPIAEL. Positions 17–36 form a DNA-binding region, H-T-H motif; it reads QEEVANGIGVGKNTYLAYEK.

In terms of biological role, transcriptional repressor of the integrated CTXPhi phage gene rstA2. The protein is Cryptic phage CTXphi transcriptional repressor RstR (rstR) of Vibrio cholerae.